The following is a 96-amino-acid chain: Aspartyl/glutamyl-tRNA(Asn/Gln) amidotransferase subunit C (96 aa).

It belongs to the GatC family. Heterotrimer of A, B and C subunits.

The catalysed reaction is L-glutamyl-tRNA(Gln) + L-glutamine + ATP + H2O = L-glutaminyl-tRNA(Gln) + L-glutamate + ADP + phosphate + H(+). It carries out the reaction L-aspartyl-tRNA(Asn) + L-glutamine + ATP + H2O = L-asparaginyl-tRNA(Asn) + L-glutamate + ADP + phosphate + 2 H(+). In terms of biological role, allows the formation of correctly charged Asn-tRNA(Asn) or Gln-tRNA(Gln) through the transamidation of misacylated Asp-tRNA(Asn) or Glu-tRNA(Gln) in organisms which lack either or both of asparaginyl-tRNA or glutaminyl-tRNA synthetases. The reaction takes place in the presence of glutamine and ATP through an activated phospho-Asp-tRNA(Asn) or phospho-Glu-tRNA(Gln). This is Aspartyl/glutamyl-tRNA(Asn/Gln) amidotransferase subunit C from Exiguobacterium sp. (strain ATCC BAA-1283 / AT1b).